Here is a 318-residue protein sequence, read N- to C-terminus: Pantothenate kinase (318 aa).

Gly96–Ser103 contacts ATP.

The protein belongs to the prokaryotic pantothenate kinase family.

The protein resides in the cytoplasm. The catalysed reaction is (R)-pantothenate + ATP = (R)-4'-phosphopantothenate + ADP + H(+). Its pathway is cofactor biosynthesis; coenzyme A biosynthesis; CoA from (R)-pantothenate: step 1/5. This chain is Pantothenate kinase, found in Coxiella burnetii (strain RSA 493 / Nine Mile phase I).